Consider the following 578-residue polypeptide: Probable cytochrome c oxidase subunit 1-alpha (578 aa).

The tract at residues 1–21 (MSILNEPQGASAAEDSYENEL) is disordered. A helical transmembrane segment spans residues 44 to 64 (IGTMYLVTSFAFFVIGGVMAL). Histidine 90 lines the Fe(II)-heme a pocket. Helical transmembrane passes span 93–113 (IMLL…IMPL), 125–145 (LNMF…GGFL), 174–194 (LWIM…VNFI), 217–237 (VLLT…ALFA), 262–282 (LFWF…FGIV), and 294–314 (IFGY…SVTV). Residues histidine 268 and tyrosine 272 each coordinate Cu cation. Residues 268 to 272 (HPEVY) constitute a cross-link (1'-histidyl-3'-tyrosine (His-Tyr)). Histidine 317 and histidine 318 together coordinate Cu cation. 2 consecutive transmembrane segments (helical) span residues 319 to 339 (MYVT…LIAV) and 363 to 383 (MLWS…GVIL). Residue histidine 401 coordinates heme a3. 3 helical membrane passes run 402-422 (FHYV…HFWW), 437-457 (ITFW…HWLG), and 480-500 (ISTI…YNIW). Histidine 403 contributes to the Fe(II)-heme a binding site.

Belongs to the heme-copper respiratory oxidase family. Associates with subunits II, III and IV to form cytochrome c oxidase. Requires Cu(2+) as cofactor. It depends on heme as a cofactor.

The protein resides in the cell membrane. The catalysed reaction is 4 Fe(II)-[cytochrome c] + O2 + 8 H(+)(in) = 4 Fe(III)-[cytochrome c] + 2 H2O + 4 H(+)(out). It functions in the pathway energy metabolism; oxidative phosphorylation. In terms of biological role, cytochrome c oxidase is the component of the respiratory chain that catalyzes the reduction of oxygen to water. Subunits 1-3 form the functional core of the enzyme complex. CO I is the catalytic subunit of the enzyme. Electrons originating in cytochrome c are transferred via the copper A center of subunit 2 and heme A of subunit 1 to the bimetallic center formed by heme A3 and copper B. This Streptomyces coelicolor (strain ATCC BAA-471 / A3(2) / M145) protein is Probable cytochrome c oxidase subunit 1-alpha (ctaD1).